A 541-amino-acid chain; its full sequence is Sorting nexin-27 (541 aa).

The segment at 1–42 (MADEDGEGIHPSAPHRNGGGGGGGGSGLHCAGNGGGGGGGPR) is disordered. A compositionally biased stretch (gly residues) spans 17–41 (NGGGGGGGGSGLHCAGNGGGGGGGP). The PDZ domain occupies 43–136 (VVRIVKSESG…ELILTVLSVP (94 aa)). Residues Ser51 and Ser62 each carry the phosphoserine modification. The region spanning 161–269 (QAVPISVPRY…EFLSESDENY (109 aa)) is the PX domain. The region spanning 273 to 362 (SDVELRVALP…TCLTIRKWLF (90 aa)) is the Ras-associating domain. Residues 273–362 (SDVELRVALP…TCLTIRKWLF (90 aa)) form an FERM-like region F1 region. Residues 373–421 (NDLAVTYFFHQAVDDVKKGYIKAEEKSYQLQKLYEQRKMVMYLNMLRTC) form an FERM-like region F2 region. Residues 425-525 (NEIIFPHCAC…RVFCELKWRK (101 aa)) are FERM-like region F3.

The protein belongs to the sorting nexin family. As to quaternary structure, core component of the SNX27-retromer, a multiprotein complex composed of SNX27, the WASH complex and the retromer complex. Interacts (via PDZ domain) with a number of target transmembrane proteins (via PDZ-binding motif): ABCC4, ADRB2, ARHGEF7, GRIA1, GRIA2, GRIN1, GRIN2A GRIN2C, KCNJ6, KCNJ9 and SLC2A1/GLUT1. Interacts (via the FERM-like regions) with the WASH complex. Interacts with SNX1. Interacts with CYTIP. Isoform 1 and isoform 2 directly interact with DGKZ. Isoform 1 and isoform 2 interact with HT4R isoform 5-HTA(A). Interacts with MCC. Interacts (via PDZ domains) with SLC9A3; directs SLC9A3 membrane insertion from early endosomes to the plasma membrane. As to expression, widely expressed. Expressed in cells of hematopoietic origin (at protein level).

Its subcellular location is the early endosome membrane. The protein resides in the cytoplasm. It localises to the cytosol. Its function is as follows. Involved in the retrograde transport from endosome to plasma membrane, a trafficking pathway that promotes the recycling of internalized transmembrane proteins. Following internalization, endocytosed transmembrane proteins are delivered to early endosomes and recycled to the plasma membrane instead of being degraded in lysosomes. SNX27 specifically binds and directs sorting of a subset of transmembrane proteins containing a PDZ-binding motif at the C-terminus: following interaction with target transmembrane proteins, associates with the retromer complex, preventing entry into the lysosomal pathway, and promotes retromer-tubule based plasma membrane recycling. SNX27 also binds with the WASH complex. Interacts with membranes containing phosphatidylinositol-3-phosphate (PtdIns(3P)). May participate in establishment of natural killer cell polarity. Recruits CYTIP to early endosomes. The sequence is that of Sorting nexin-27 (SNX27) from Homo sapiens (Human).